The primary structure comprises 351 residues: Phospho-N-acetylmuramoyl-pentapeptide-transferase (351 aa).

The next 10 membrane-spanning stretches (helical) occupy residues 3 to 23, 51 to 71, 76 to 96, 113 to 133, 152 to 172, 181 to 201, 223 to 243, 250 to 270, 275 to 295, and 329 to 349; these read GIIA…PPLI, TMGG…AHAV, PTVS…VGFL, GAKM…VTMF, FGPP…IVAT, GLDG…VIIG, PLDL…FLWF, IFMG…LAIT, LLLL…IIQV, and FWII…LEWM.

The protein belongs to the glycosyltransferase 4 family. MraY subfamily. It depends on Mg(2+) as a cofactor.

Its subcellular location is the cell membrane. The enzyme catalyses UDP-N-acetyl-alpha-D-muramoyl-L-alanyl-gamma-D-glutamyl-meso-2,6-diaminopimeloyl-D-alanyl-D-alanine + di-trans,octa-cis-undecaprenyl phosphate = di-trans,octa-cis-undecaprenyl diphospho-N-acetyl-alpha-D-muramoyl-L-alanyl-D-glutamyl-meso-2,6-diaminopimeloyl-D-alanyl-D-alanine + UMP. Its pathway is cell wall biogenesis; peptidoglycan biosynthesis. Its function is as follows. Catalyzes the initial step of the lipid cycle reactions in the biosynthesis of the cell wall peptidoglycan: transfers peptidoglycan precursor phospho-MurNAc-pentapeptide from UDP-MurNAc-pentapeptide onto the lipid carrier undecaprenyl phosphate, yielding undecaprenyl-pyrophosphoryl-MurNAc-pentapeptide, known as lipid I. The polypeptide is Phospho-N-acetylmuramoyl-pentapeptide-transferase (Thermobifida fusca (strain YX)).